The sequence spans 398 residues: Acetate kinase (398 aa).

Position 9 (Asn-9) interacts with Mg(2+). Position 16 (Lys-16) interacts with ATP. Arg-90 provides a ligand contact to substrate. Asp-147 (proton donor/acceptor) is an active-site residue. ATP-binding positions include 207–211 (HIGNG), 282–284 (DLR), and 330–334 (GVGEN). Glu-384 is a binding site for Mg(2+).

This sequence belongs to the acetokinase family. As to quaternary structure, homodimer. Requires Mg(2+) as cofactor. Mn(2+) is required as a cofactor.

The protein resides in the cytoplasm. The enzyme catalyses acetate + ATP = acetyl phosphate + ADP. It participates in metabolic intermediate biosynthesis; acetyl-CoA biosynthesis; acetyl-CoA from acetate: step 1/2. Functionally, catalyzes the formation of acetyl phosphate from acetate and ATP. Can also catalyze the reverse reaction. This is Acetate kinase from Staphylococcus haemolyticus (strain JCSC1435).